Here is an 802-residue protein sequence, read N- to C-terminus: Phenylalanine--tRNA ligase beta subunit (802 aa).

The tRNA-binding domain maps to 40–149 (RPELDFVKIV…EGAEIGKTIR (110 aa)). The B5 domain occupies 407–484 (HKEVRIHTDI…RTRGYDTIQV (78 aa)). Residues Asp462, Asp468, Glu471, and Glu472 each contribute to the Mg(2+) site. Residues 710-802 (SQFPEAEIDI…LAGKNGFVLR (93 aa)) enclose the FDX-ACB domain.

This sequence belongs to the phenylalanyl-tRNA synthetase beta subunit family. Type 1 subfamily. In terms of assembly, tetramer of two alpha and two beta subunits. The cofactor is Mg(2+).

Its subcellular location is the cytoplasm. The enzyme catalyses tRNA(Phe) + L-phenylalanine + ATP = L-phenylalanyl-tRNA(Phe) + AMP + diphosphate + H(+). The sequence is that of Phenylalanine--tRNA ligase beta subunit from Leptospira borgpetersenii serovar Hardjo-bovis (strain L550).